The sequence spans 380 residues: Coiled-coil domain-containing protein 74B (380 aa).

Disordered regions lie at residues 1–51 (MSGA…KRNL), 89–108 (LIMN…HLSR), and 128–202 (GGPS…DVPQ). Residues 34–44 (LRPQSPQLRQS) show a composition bias toward polar residues. A coiled-coil region spans residues 47 to 93 (QKRNLDLEKSLQFLQQQHSEMLAKLHEEIEHLKRENKDLRYKLIMNQ). Basic residues predominate over residues 141 to 151 (RTHRPGGKHGR). Residues 165 to 182 (DSLSTSSFQSVKSISNSG) are compositionally biased toward polar residues.

The chain is Coiled-coil domain-containing protein 74B (CCDC74B) from Homo sapiens (Human).